Reading from the N-terminus, the 166-residue chain is Telethonin (166 aa).

Ser39 is modified (phosphoserine). The interval 145–166 (VSKPGTLRRSLSRSMSQEAQRG) is disordered. Residues 156–166 (SRSMSQEAQRG) show a composition bias toward polar residues.

As to quaternary structure, interacts with MYOZ1, MYOZ2 and MYOZ3. Interacts with CSRP3. Interacts directly with the N-terminal Ig-like domains of 2 titin (TTN) molecules. Interacts with ANKRD2; the interaction is direct.

It is found in the cytoplasm. The protein resides in the myofibril. It localises to the sarcomere. Muscle assembly regulating factor. Mediates the antiparallel assembly of titin (TTN) molecules at the sarcomeric Z-disk. This is Telethonin (TCAP) from Bos taurus (Bovine).